Here is a 251-residue protein sequence, read N- to C-terminus: Ubiquinone/menaquinone biosynthesis C-methyltransferase UbiE (251 aa).

Residues Thr-74, Asp-95, 123-124, and Ser-140 each bind S-adenosyl-L-methionine; that span reads NA.

This sequence belongs to the class I-like SAM-binding methyltransferase superfamily. MenG/UbiE family.

It carries out the reaction a 2-demethylmenaquinol + S-adenosyl-L-methionine = a menaquinol + S-adenosyl-L-homocysteine + H(+). The enzyme catalyses a 2-methoxy-6-(all-trans-polyprenyl)benzene-1,4-diol + S-adenosyl-L-methionine = a 5-methoxy-2-methyl-3-(all-trans-polyprenyl)benzene-1,4-diol + S-adenosyl-L-homocysteine + H(+). It participates in quinol/quinone metabolism; menaquinone biosynthesis; menaquinol from 1,4-dihydroxy-2-naphthoate: step 2/2. Its pathway is cofactor biosynthesis; ubiquinone biosynthesis. Methyltransferase required for the conversion of demethylmenaquinol (DMKH2) to menaquinol (MKH2) and the conversion of 2-polyprenyl-6-methoxy-1,4-benzoquinol (DDMQH2) to 2-polyprenyl-3-methyl-6-methoxy-1,4-benzoquinol (DMQH2). This is Ubiquinone/menaquinone biosynthesis C-methyltransferase UbiE from Yersinia pestis bv. Antiqua (strain Antiqua).